The sequence spans 152 residues: Lipoprotein signal peptidase (152 aa).

3 helical membrane passes run 5-25, 61-81, and 84-104; these read LFVL…FWIV, WFFV…LATH, and LNIW…GNFI. Catalysis depends on residues Asp114 and Asp130. Residues 125–145 traverse the membrane as a helical segment; that stretch reads IFNVADSYLTVGVILLLICLW.

Belongs to the peptidase A8 family.

Its subcellular location is the cell membrane. It carries out the reaction Release of signal peptides from bacterial membrane prolipoproteins. Hydrolyzes -Xaa-Yaa-Zaa-|-(S,diacylglyceryl)Cys-, in which Xaa is hydrophobic (preferably Leu), and Yaa (Ala or Ser) and Zaa (Gly or Ala) have small, neutral side chains.. It participates in protein modification; lipoprotein biosynthesis (signal peptide cleavage). Its function is as follows. This protein specifically catalyzes the removal of signal peptides from prolipoproteins. The protein is Lipoprotein signal peptidase of Streptococcus pyogenes serotype M1.